The chain runs to 381 residues: Cytochrome b (381 aa).

4 helical membrane passes run 34-54, 78-99, 114-134, and 179-199; these read FGSL…FLAM, WLIR…YLHI, WNIG…GYVL, and FFAF…IHLL. The heme b site is built by histidine 84 and histidine 98. Heme b contacts are provided by histidine 183 and histidine 197. Residue histidine 202 coordinates a ubiquinone. A run of 4 helical transmembrane segments spans residues 227–247, 289–309, 321–341, and 348–368; these read YKDL…ALFM, LGGV…PLLH, MTQI…WIGG, and FIMV…IIMP.

It belongs to the cytochrome b family. As to quaternary structure, the cytochrome bc1 complex contains 3 respiratory subunits (MT-CYB, CYC1 and UQCRFS1), 2 core proteins (UQCRC1 and UQCRC2) and probably 6 low-molecular weight proteins. Heme b serves as cofactor.

Its subcellular location is the mitochondrion inner membrane. Functionally, component of the ubiquinol-cytochrome c reductase complex (complex III or cytochrome b-c1 complex) that is part of the mitochondrial respiratory chain. The b-c1 complex mediates electron transfer from ubiquinol to cytochrome c. Contributes to the generation of a proton gradient across the mitochondrial membrane that is then used for ATP synthesis. This Carcharhinus plumbeus (Sandbar shark) protein is Cytochrome b (mt-cyb).